A 261-amino-acid chain; its full sequence is 3'-5' ssDNA/RNA exonuclease TatD (261 aa).

A divalent metal cation contacts are provided by Glu92, His128, and His153.

Belongs to the metallo-dependent hydrolases superfamily. TatD-type hydrolase family. TatD subfamily. Monomer. Mg(2+) is required as a cofactor.

Its subcellular location is the cytoplasm. Functionally, 3'-5' exonuclease that prefers single-stranded DNA and RNA. May play a role in the H(2)O(2)-induced DNA damage repair. In Erwinia billingiae (strain Eb661), this protein is 3'-5' ssDNA/RNA exonuclease TatD.